Reading from the N-terminus, the 620-residue chain is Glutathione-regulated potassium-efflux system protein KefC (620 aa).

12 consecutive transmembrane segments (helical) span residues 4–24 (HTLLQALIYLGSAALIVPIAV), 26–46 (LGLGSVLGYLIAGCIIGPWGL), 54–74 (SILHFAEIGVVLMLFVIGLEL), 90–110 (GALQMVVCGGLIGLFCMFLGL), 114–134 (VAELIGMTLALSSTAIAMQAM), 149–169 (FAVLLFQDIAAIPLVAMIPLL), 178–198 (LGAFALSALKVAGALALVVLL), 218–238 (VFSAVALFLVFGFGLLLEEVG), 270–290 (GLLLGLFFIGVGMSIDFGTLV), 294–314 (LRILLLLAGFLAIKIVMLWLV), 327–347 (WFAVLLGQGSEFAFVVFGAAQ), and 359–379 (ALTLAVALSMAATPIFLVLLT). An RCK N-terminal domain is found at 399–518 (QPRVIVAGFG…AGVAMPERET (120 aa)). Residues 599-620 (QGTAEGKHSGEAADEPEVKPSI) are disordered.

The protein belongs to the monovalent cation:proton antiporter 2 (CPA2) transporter (TC 2.A.37) family. KefC subfamily. In terms of assembly, homodimer. Interacts with the regulatory subunit KefF.

Its subcellular location is the cell inner membrane. Functionally, pore-forming subunit of a potassium efflux system that confers protection against electrophiles. Catalyzes K(+)/H(+) antiport. The chain is Glutathione-regulated potassium-efflux system protein KefC from Salmonella dublin (strain CT_02021853).